A 588-amino-acid chain; its full sequence is uncharacterized protein (588 aa).

7 helical membrane passes run 14–34 (FLLFLPYFIGLLFLGFIKGIV), 49–69 (AVILSLLPVHIVWTFYSIVSA), 78–98 (IFLCLCLPAAIILWPIVGILG), 184–204 (ALVVSVLGILVDPPVISLVAI), 235–255 (VPIAGLAILLWPLAVTGAVIG), 257–274 (VISSIFLGAYAGVVSYQE), and 275–292 (SSFYYGLCYIVASVSIYD). Ser486 is modified (phosphoserine). Residues 566–588 (RKGSVNGSDQESQKGVSRNVDIV) form a disordered region. Residues 570 to 581 (VNGSDQESQKGV) are compositionally biased toward polar residues.

It localises to the membrane. This is an uncharacterized protein from Arabidopsis thaliana (Mouse-ear cress).